Consider the following 24-residue polypeptide: Protein YsdE (24 aa).

The chain is Protein YsdE from Escherichia coli (strain K12).